The chain runs to 522 residues: Peptide chain release factor 3 (522 aa).

One can recognise a tr-type G domain in the interval 10-277 (ASRKTFAIIS…TFVDFAPSPS (268 aa)). Residues 19 to 26 (SHPDAGKT), 87 to 91 (DTPGH), and 141 to 144 (NKMD) contribute to the GTP site.

The protein belongs to the TRAFAC class translation factor GTPase superfamily. Classic translation factor GTPase family. PrfC subfamily.

It localises to the cytoplasm. Increases the formation of ribosomal termination complexes and stimulates activities of RF-1 and RF-2. It binds guanine nucleotides and has strong preference for UGA stop codons. It may interact directly with the ribosome. The stimulation of RF-1 and RF-2 is significantly reduced by GTP and GDP, but not by GMP. The chain is Peptide chain release factor 3 from Listeria monocytogenes serotype 4b (strain F2365).